Reading from the N-terminus, the 196-residue chain is Translation machinery-associated protein 22 (196 aa).

Residues 97-168 enclose the SUI1 domain; that stretch reads VIVKREARTK…EVVAYIHSLL (72 aa).

The protein belongs to the DENR family. As to quaternary structure, interacts with the 40S ribosomal subunit.

Its subcellular location is the cytoplasm. The protein is Translation machinery-associated protein 22 (TMA22) of Candida glabrata (strain ATCC 2001 / BCRC 20586 / JCM 3761 / NBRC 0622 / NRRL Y-65 / CBS 138) (Yeast).